We begin with the raw amino-acid sequence, 263 residues long: uncharacterized protein (263 aa).

An N-terminal signal peptide occupies residues 1–22 (MEYLKRLALLISVIILTIFIMG). Cys-23 is lipidated: N-palmitoyl cysteine. Residue Cys-23 is the site of S-diacylglycerol cysteine attachment.

Belongs to the staphylococcal tandem lipoprotein family.

The protein resides in the cell membrane. This is an uncharacterized protein from Staphylococcus aureus (strain COL).